A 106-amino-acid chain; its full sequence is uncharacterized protein (106 aa).

4 helical membrane-spanning segments follow: residues 3–23, 29–49, 50–70, and 82–102; these read WFLL…MKYI, KWPI…LSQA, MIVL…SIGV, and FQLS…GLRL.

It belongs to the drug/metabolite transporter (DMT) superfamily. Small multidrug resistance (SMR) (TC 2.A.7.1) family.

The protein resides in the cell membrane. This is an uncharacterized protein from Bacillus subtilis (strain 168).